The primary structure comprises 280 residues: Tumor necrosis factor ligand superfamily member 6 (280 aa).

Residues 1-80 (MQQPLNYPYP…KTRRDHNTGL (80 aa)) are Cytoplasmic-facing. Residues 20-71 (SSPWGPPGSVLPCPSSVPGRPGQRRPPPPPPPTLPPPPPPPPLPPLPLPPLK) are disordered. The span at 43–69 (RRPPPPPPPTLPPPPPPPPLPPLPLPP) shows a compositional bias: pro residues. Residues 81–101 (CLLVMFFMVLVALVGLGLGMF) traverse the membrane as a helical; Signal-anchor for type II membrane protein segment. Residues 102 to 280 (QLFHLQKELA…SKTFFGLYKL (179 aa)) lie on the Extracellular side of the membrane. One can recognise a THD domain in the interval 144–280 (KVAHLTGKPN…SKTFFGLYKL (137 aa)). Asn-183 is a glycosylation site (N-linked (GlcNAc...) asparagine). Cys-201 and Cys-232 form a disulfide bridge. Asn-249 and Asn-259 each carry an N-linked (GlcNAc...) asparagine glycan.

The protein belongs to the tumor necrosis factor family. In terms of assembly, homotrimer. Interacts with ARHGAP9, BAIAP2L1, BTK, CACNB3, CACNB4, CRK, DLG2, DNMBP, DOCK4, EPS8L3, FGR, FYB1, FYN, HCK, ITK, ITSN2, KALRN, LYN, MACC1, MIA, MPP4, MYO15A, NCF1, NCK1, NCK2, NCKIPSD, OSTF1, PIK3R1, PSTPIP1, RIMBP3C, SAMSN1, SH3GL3, SH3PXD2B, SH3PXD2A, SH3RF2, SKAP2, SNX33, SNX9, SORBS3, SPTA1, SRC, SRGAP1, SRGAP2, SRGAP3, TEC, TJP3 and YES1. Post-translationally, the soluble form derives from the membrane form by proteolytic processing. The membrane-bound form undergoes two successive intramembrane proteolytic cleavages. The first one is processed by ADAM10 producing an N-terminal fragment, which lacks the receptor-binding extracellular domain. This ADAM10-processed FasL (FasL APL) remnant form is still membrane anchored and further processed by SPPL2A that liberates the FasL intracellular domain (FasL ICD). FasL shedding by ADAM10 is a prerequisite for subsequent intramembrane cleavage by SPPL2A in T-cells. In terms of processing, phosphorylated by FGR on tyrosine residues; this is required for ubiquitination and subsequent internalization. N-glycosylated. Glycosylation enhances apoptotic activity. Post-translationally, monoubiquitinated.

It is found in the cell membrane. Its subcellular location is the cytoplasmic vesicle lumen. The protein resides in the lysosome lumen. It localises to the secreted. The protein localises to the nucleus. Its function is as follows. Cytokine that binds to TNFRSF6/FAS, a receptor that transduces the apoptotic signal into cells. Involved in cytotoxic T-cell-mediated apoptosis, natural killer cell-mediated apoptosis and in T-cell development. Initiates fratricidal/suicidal activation-induced cell death (AICD) in antigen-activated T-cells contributing to the termination of immune responses. TNFRSF6/FAS-mediated apoptosis has also a role in the induction of peripheral tolerance. Binds to TNFRSF6B/DcR3, a decoy receptor that blocks apoptosis. Induces FAS-mediated activation of NF-kappa-B, initiating non-apoptotic signaling pathways. Can induce apoptosis but does not appear to be essential for this process. Functionally, cytoplasmic form induces gene transcription inhibition. The polypeptide is Tumor necrosis factor ligand superfamily member 6 (FASLG) (Felis catus (Cat)).